The primary structure comprises 381 residues: tRNA-specific 2-thiouridylase MnmA (381 aa).

Residues 26 to 33 (AMSGGVDS) and Leu52 each bind ATP. Cys120 serves as the catalytic Nucleophile. Cys120 and Cys217 are disulfide-bonded. Gly144 lines the ATP pocket. The tract at residues 166–168 (RDQ) is interaction with tRNA. The Cysteine persulfide intermediate role is filled by Cys217.

This sequence belongs to the MnmA/TRMU family.

It localises to the cytoplasm. It carries out the reaction S-sulfanyl-L-cysteinyl-[protein] + uridine(34) in tRNA + AH2 + ATP = 2-thiouridine(34) in tRNA + L-cysteinyl-[protein] + A + AMP + diphosphate + H(+). Its function is as follows. Catalyzes the 2-thiolation of uridine at the wobble position (U34) of tRNA, leading to the formation of s(2)U34. The sequence is that of tRNA-specific 2-thiouridylase MnmA from Ruegeria sp. (strain TM1040) (Silicibacter sp.).